An 844-amino-acid polypeptide reads, in one-letter code: MTQAALAMSITATDPVDTATDARLKECIDSACQRVAPLWPLKHFVAVNPFLGFTGQSFAATAATFERVVRTRILMPRAFYRQALDDGRIDDAALARALDIHPSVGLGVEQLKQQARATAAPSSPPAVVATVAEVLDRLAEGDRYVSLVAFMIDEISAFCAGYFDEGQASWPSPVRSLKPYAAWRRLAAYDRNPEVMGLTGFRNAIAELPADPVQAIGLIITRLGIPERAVEDYLVRALFDIGGWSAYARYIGWSAERDGQRDDTLVELLAIRLAWGYALFQARTDAAFKIAWAQAMEEAAKLPDDQRLDDTPELAVDLVLHEAYEIAIRNQLIARLAGHGTGAAVARLPARPPVQAAFCIDVRSEIFRRALETAYPEAETIGFAGFFGFPIEYVPIGHTRGGAQCPVLLKPAFIVCEAVKDADDVEQAEVLGLRLLRRRAAKAWKSFKVSAVSSFSFVETAGLGFAAKIATDSAGVTRPVPSPVVDGLDPEIAARVMPRLAPGELGGRVTGFNDVQRVAMAEAALKAMSLTGPFARLVLLAGHGSTTVNNPHASGLDCGACGGHTGEANARVAAAVLNDPRVRDGLRAKGIDIPADCWFLGALHDTTTDAVTVFDEDDVPAALAQDLARLKARLADAARLARLERSALLGIPDKSAVDAAVIARSRDWSQVRPEWGLAGNCAFIAAPRSFTRGLDLGGRAFLHSYEAERDDGHRTLELIMTAPMVVANWINLQYFGSTVNNAAFGSGNKVLHNIVGQLGVLEGNAGDLRVGLPWQSVHDGTRLVHEPVRLNVFIAAPESAMDEIMQRQPGVRDLVVNGWVMLHSLGDHGTTIRRCVSPGVWIAA.

Residues Cys359, Asp361, His543, and Cys558 each contribute to the Zn(2+) site.

This sequence belongs to the inorganic carbon transporter (TC 9.A.2) DabA family. In terms of assembly, forms a complex with DabB. Requires Zn(2+) as cofactor.

It localises to the cell inner membrane. In terms of biological role, part of an energy-coupled inorganic carbon pump. This Bradyrhizobium sp. (strain BTAi1 / ATCC BAA-1182) protein is Probable inorganic carbon transporter subunit DabA 1.